Here is a 247-residue protein sequence, read N- to C-terminus: Pulmonary surfactant-associated protein A (247 aa).

The N-terminal stretch at 1–15 (MLLLSLALTLISAPA) is a signal peptide. Residues 27–99 (GSPGIPGTPG…PGERGPPGLP (73 aa)) enclose the Collagen-like domain. 4-hydroxyproline is present on residues Pro-29, Pro-32, Pro-35, Pro-41, Pro-53, Pro-56, Pro-62, Pro-66, and Pro-69. The segment at 30 to 100 (GIPGTPGSHG…GERGPPGLPA (71 aa)) is disordered. Basic and acidic residues predominate over residues 41–50 (PGRDGRDGVK). Residues 53 to 64 (PGPPGPMGPPGG) are compositionally biased toward pro residues. Basic and acidic residues predominate over residues 83–92 (ERGDKGEPGE). One can recognise a C-type lectin domain in the interval 132–247 (AVGEKIFSTN…LQYRLVICEF (116 aa)). Intrachain disulfides connect Cys-154–Cys-245 and Cys-223–Cys-237. Asn-206 is a glycosylation site (N-linked (GlcNAc...) asparagine). 4 residues coordinate Ca(2+): Glu-214, Arg-216, Asn-233, and Asp-234.

This sequence belongs to the SFTPA family. In terms of assembly, oligomeric complex of 6 set of homotrimers.

It localises to the secreted. The protein resides in the extracellular space. It is found in the extracellular matrix. Its subcellular location is the surface film. In terms of biological role, in presence of calcium ions, it binds to surfactant phospholipids and contributes to lower the surface tension at the air-liquid interface in the alveoli of the mammalian lung and is essential for normal respiration. Enhances the expression of MYO18A/SP-R210 on alveolar macrophages. The polypeptide is Pulmonary surfactant-associated protein A (SFTPA1) (Oryctolagus cuniculus (Rabbit)).